The sequence spans 452 residues: Transcription factor AP-2-delta (452 aa).

The residue at position 239 (serine 239) is a Phosphoserine; by PKA. An H-S-H (helix-span-helix), dimerization region spans residues 280 to 410; it reads RRKAANVTLL…VLSEMLNYLE (131 aa). Positions 416–452 are disordered; sequence KNGGAADSGQGHANSEKAPLRKTSEAAVKEGKTEKTD. Over residues 429-452 the composition is skewed to basic and acidic residues; sequence NSEKAPLRKTSEAAVKEGKTEKTD.

This sequence belongs to the AP-2 family. As to quaternary structure, binds DNA as a dimer. Can form homodimers or heterodimers with other AP-2 family members. Highly expressed in brain, placenta, skeletal muscle, thymus, small intestine, and prostate, and expressed at lower levels in leukocyte, spleen, testis, ovary and colon. Barely detectable in heart, kidney, liver, lung or pancreas.

It localises to the nucleus. In terms of biological role, sequence-specific DNA-binding protein that interacts with inducible viral and cellular enhancer elements to regulate transcription of selected genes. AP-2 factors bind to the consensus sequence 5'-GCCNNNGGC-3' and activate genes involved in a large spectrum of important biological functions including proper eye, face, body wall, limb and neural tube development. They also suppress a number of genes including MCAM/MUC18, C/EBP alpha and MYC. The polypeptide is Transcription factor AP-2-delta (Homo sapiens (Human)).